The following is a 541-amino-acid chain: Light-independent protochlorophyllide reductase subunit B (541 aa).

Asp-36 serves as a coordination point for [4Fe-4S] cluster. Residue Asp-290 is the Proton donor of the active site. Position 425–426 (Gly-425–Leu-426) interacts with substrate.

The protein belongs to the ChlB/BchB/BchZ family. As to quaternary structure, protochlorophyllide reductase is composed of three subunits; ChlL, ChlN and ChlB. Forms a heterotetramer of two ChlB and two ChlN subunits. The cofactor is [4Fe-4S] cluster.

It catalyses the reaction chlorophyllide a + oxidized 2[4Fe-4S]-[ferredoxin] + 2 ADP + 2 phosphate = protochlorophyllide a + reduced 2[4Fe-4S]-[ferredoxin] + 2 ATP + 2 H2O. It participates in porphyrin-containing compound metabolism; chlorophyll biosynthesis (light-independent). Component of the dark-operative protochlorophyllide reductase (DPOR) that uses Mg-ATP and reduced ferredoxin to reduce ring D of protochlorophyllide (Pchlide) to form chlorophyllide a (Chlide). This reaction is light-independent. The NB-protein (ChlN-ChlB) is the catalytic component of the complex. This Synechococcus sp. (strain CC9902) protein is Light-independent protochlorophyllide reductase subunit B.